Consider the following 79-residue polypeptide: Small ribosomal subunit protein bS20 (79 aa).

The protein belongs to the bacterial ribosomal protein bS20 family.

In terms of biological role, binds directly to 16S ribosomal RNA. This Karelsulcia muelleri (strain GWSS) (Sulcia muelleri) protein is Small ribosomal subunit protein bS20.